The sequence spans 143 residues: Large ribosomal subunit protein uL11 (143 aa).

This sequence belongs to the universal ribosomal protein uL11 family. As to quaternary structure, part of the ribosomal stalk of the 50S ribosomal subunit. Interacts with L10 and the large rRNA to form the base of the stalk. L10 forms an elongated spine to which L12 dimers bind in a sequential fashion forming a multimeric L10(L12)X complex. One or more lysine residues are methylated.

Its function is as follows. Forms part of the ribosomal stalk which helps the ribosome interact with GTP-bound translation factors. The polypeptide is Large ribosomal subunit protein uL11 (Caulobacter vibrioides (strain ATCC 19089 / CIP 103742 / CB 15) (Caulobacter crescentus)).